The sequence spans 257 residues: Thiazole synthase (257 aa).

Lys-96 serves as the catalytic Schiff-base intermediate with DXP. Residues Gly-157, 184–185 (AG), and 206–207 (NT) contribute to the 1-deoxy-D-xylulose 5-phosphate site.

It belongs to the ThiG family. As to quaternary structure, homotetramer. Forms heterodimers with either ThiH or ThiS.

It localises to the cytoplasm. The catalysed reaction is [ThiS sulfur-carrier protein]-C-terminal-Gly-aminoethanethioate + 2-iminoacetate + 1-deoxy-D-xylulose 5-phosphate = [ThiS sulfur-carrier protein]-C-terminal Gly-Gly + 2-[(2R,5Z)-2-carboxy-4-methylthiazol-5(2H)-ylidene]ethyl phosphate + 2 H2O + H(+). It functions in the pathway cofactor biosynthesis; thiamine diphosphate biosynthesis. Its function is as follows. Catalyzes the rearrangement of 1-deoxy-D-xylulose 5-phosphate (DXP) to produce the thiazole phosphate moiety of thiamine. Sulfur is provided by the thiocarboxylate moiety of the carrier protein ThiS. In vitro, sulfur can be provided by H(2)S. This Allorhizobium ampelinum (strain ATCC BAA-846 / DSM 112012 / S4) (Agrobacterium vitis (strain S4)) protein is Thiazole synthase.